The primary structure comprises 214 residues: Large ribosomal subunit protein uL3 (214 aa).

Glutamine 151 is subject to N5-methylglutamine.

It belongs to the universal ribosomal protein uL3 family. Part of the 50S ribosomal subunit. Forms a cluster with proteins L14 and L19. Methylated by PrmB.

Functionally, one of the primary rRNA binding proteins, it binds directly near the 3'-end of the 23S rRNA, where it nucleates assembly of the 50S subunit. This is Large ribosomal subunit protein uL3 from Saccharophagus degradans (strain 2-40 / ATCC 43961 / DSM 17024).